A 216-amino-acid chain; its full sequence is Ribosomal RNA small subunit methyltransferase G (216 aa).

Residues glycine 81, leucine 86, 132-133 (VE), and arginine 147 contribute to the S-adenosyl-L-methionine site.

It belongs to the methyltransferase superfamily. RNA methyltransferase RsmG family.

The protein resides in the cytoplasm. The enzyme catalyses guanosine(527) in 16S rRNA + S-adenosyl-L-methionine = N(7)-methylguanosine(527) in 16S rRNA + S-adenosyl-L-homocysteine. Specifically methylates the N7 position of guanine in position 527 of 16S rRNA. This is Ribosomal RNA small subunit methyltransferase G from Hydrogenovibrio crunogenus (strain DSM 25203 / XCL-2) (Thiomicrospira crunogena).